The chain runs to 781 residues: Matrix non-peptidase homolog 1 (781 aa).

Residues 1-27 form the signal peptide; it reads MTPPPASPSKKAKSSWLLIALIAVIIG. Asn54 carries N-linked (GlcNAc...) asparagine glycosylation. Positions 63-94 are enriched in low complexity; it reads TSKATVSTTTTQSATTPSTTTTRIEETTTTTS. The interval 63–113 is disordered; the sequence is TSKATVSTTTTQSATTPSTTTTRIEETTTTTSGAFDESVKNSEASTSTIPT. N-linked (GlcNAc...) asparagine glycans are attached at residues Asn183, Asn341, Asn375, and Asn520.

This Caenorhabditis elegans protein is Matrix non-peptidase homolog 1 (mnp-1).